The primary structure comprises 348 residues: Probable dual-specificity RNA methyltransferase RlmN (348 aa).

The active-site Proton acceptor is the Glu-89. Residues 95 to 328 (HKNRNTVCVS…VTLRISYGSR (234 aa)) form the Radical SAM core domain. An intrachain disulfide couples Cys-102 to Cys-333. [4Fe-4S] cluster is bound by residues Cys-109, Cys-113, and Cys-116. S-adenosyl-L-methionine contacts are provided by residues 159–160 (GE), Ser-191, 214–216 (SLH), and Asn-290. Residue Cys-333 is the S-methylcysteine intermediate of the active site.

It belongs to the radical SAM superfamily. RlmN family. Requires [4Fe-4S] cluster as cofactor.

It is found in the cytoplasm. The enzyme catalyses adenosine(2503) in 23S rRNA + 2 reduced [2Fe-2S]-[ferredoxin] + 2 S-adenosyl-L-methionine = 2-methyladenosine(2503) in 23S rRNA + 5'-deoxyadenosine + L-methionine + 2 oxidized [2Fe-2S]-[ferredoxin] + S-adenosyl-L-homocysteine. The catalysed reaction is adenosine(37) in tRNA + 2 reduced [2Fe-2S]-[ferredoxin] + 2 S-adenosyl-L-methionine = 2-methyladenosine(37) in tRNA + 5'-deoxyadenosine + L-methionine + 2 oxidized [2Fe-2S]-[ferredoxin] + S-adenosyl-L-homocysteine. Specifically methylates position 2 of adenine 2503 in 23S rRNA and position 2 of adenine 37 in tRNAs. The sequence is that of Probable dual-specificity RNA methyltransferase RlmN from Dictyoglomus thermophilum (strain ATCC 35947 / DSM 3960 / H-6-12).